A 175-amino-acid polypeptide reads, in one-letter code: Bifunctional protein PyrR (175 aa).

The short motif at 97-109 (IVLIDDVLFTGRT) is the PRPP-binding element.

The protein belongs to the purine/pyrimidine phosphoribosyltransferase family. PyrR subfamily. As to quaternary structure, homodimer and homohexamer; in equilibrium.

The enzyme catalyses UMP + diphosphate = 5-phospho-alpha-D-ribose 1-diphosphate + uracil. In terms of biological role, regulates transcriptional attenuation of the pyrimidine nucleotide (pyr) operon by binding in a uridine-dependent manner to specific sites on pyr mRNA. This disrupts an antiterminator hairpin in the RNA and favors formation of a downstream transcription terminator, leading to a reduced expression of downstream genes. Functionally, also displays a weak uracil phosphoribosyltransferase activity which is not physiologically significant. The polypeptide is Bifunctional protein PyrR (Leuconostoc mesenteroides subsp. mesenteroides (strain ATCC 8293 / DSM 20343 / BCRC 11652 / CCM 1803 / JCM 6124 / NCDO 523 / NBRC 100496 / NCIMB 8023 / NCTC 12954 / NRRL B-1118 / 37Y)).